Reading from the N-terminus, the 396-residue chain is S-adenosylmethionine synthase (396 aa).

His-16 is an ATP binding site. Asp-18 provides a ligand contact to Mg(2+). Glu-44 serves as a coordination point for K(+). Residues Glu-57 and Gln-100 each contribute to the L-methionine site. Residues 100–110 (QSPDIAQGVDR) are flexible loop. ATP is bound by residues 167–169 (DAK), 233–234 (RF), Asp-242, 248–249 (RK), Ala-265, and Lys-269. L-methionine is bound at residue Asp-242. Residue Lys-273 participates in L-methionine binding.

Belongs to the AdoMet synthase family. Homotetramer; dimer of dimers. Requires Mg(2+) as cofactor. It depends on K(+) as a cofactor.

Its subcellular location is the cytoplasm. It catalyses the reaction L-methionine + ATP + H2O = S-adenosyl-L-methionine + phosphate + diphosphate. It functions in the pathway amino-acid biosynthesis; S-adenosyl-L-methionine biosynthesis; S-adenosyl-L-methionine from L-methionine: step 1/1. Its function is as follows. Catalyzes the formation of S-adenosylmethionine (AdoMet) from methionine and ATP. The overall synthetic reaction is composed of two sequential steps, AdoMet formation and the subsequent tripolyphosphate hydrolysis which occurs prior to release of AdoMet from the enzyme. This chain is S-adenosylmethionine synthase, found in Paraburkholderia phytofirmans (strain DSM 17436 / LMG 22146 / PsJN) (Burkholderia phytofirmans).